A 282-amino-acid chain; its full sequence is Pantothenate synthetase (282 aa).

30–37 contributes to the ATP binding site; it reads MGNLHDGH. The Proton donor role is filled by His-37. Residue Gln-61 coordinates (R)-pantoate. Position 61 (Gln-61) interacts with beta-alanine. 149–152 lines the ATP pocket; it reads GEKD. (R)-pantoate is bound at residue Gln-155. 186 to 189 is an ATP binding site; that stretch reads MSSR.

It belongs to the pantothenate synthetase family. As to quaternary structure, homodimer.

The protein localises to the cytoplasm. It carries out the reaction (R)-pantoate + beta-alanine + ATP = (R)-pantothenate + AMP + diphosphate + H(+). It participates in cofactor biosynthesis; (R)-pantothenate biosynthesis; (R)-pantothenate from (R)-pantoate and beta-alanine: step 1/1. Its function is as follows. Catalyzes the condensation of pantoate with beta-alanine in an ATP-dependent reaction via a pantoyl-adenylate intermediate. The protein is Pantothenate synthetase of Alteromonas mediterranea (strain DSM 17117 / CIP 110805 / LMG 28347 / Deep ecotype).